The following is a 205-amino-acid chain: Small ribosomal subunit protein uS4 (205 aa).

The segment covering 1–16 (MSKRESSKYKIDRRMG) has biased composition (basic and acidic residues). The disordered stretch occupies residues 1–46 (MSKRESSKYKIDRRMGENIWGRPKSPVNRREYGPGQHGQRRKSKLS). Residues 94 to 157 (SRLDAIVYRA…KQLVTVLEAV (64 aa)) enclose the S4 RNA-binding domain.

Belongs to the universal ribosomal protein uS4 family. As to quaternary structure, part of the 30S ribosomal subunit. Contacts protein S5. The interaction surface between S4 and S5 is involved in control of translational fidelity.

In terms of biological role, one of the primary rRNA binding proteins, it binds directly to 16S rRNA where it nucleates assembly of the body of the 30S subunit. With S5 and S12 plays an important role in translational accuracy. In Rhizobium meliloti (strain 1021) (Ensifer meliloti), this protein is Small ribosomal subunit protein uS4.